Here is a 345-residue protein sequence, read N- to C-terminus: Myb/SANT-like DNA-binding domain-containing protein 4 (345 aa).

The 74-residue stretch at 4–77 (LKRKRKSNFS…EVKRRYLDWR (74 aa)) folds into the Myb-like domain. Lysine 9 is covalently cross-linked (Glycyl lysine isopeptide (Lys-Gly) (interchain with G-Cter in SUMO2)). Serine 106 bears the Phosphoserine mark. Residues lysine 114 and lysine 142 each participate in a glycyl lysine isopeptide (Lys-Gly) (interchain with G-Cter in SUMO2) cross-link. Residues 141–175 (VKVEEEERDPQSPEFEIEEEEEMLSSVIPDSRREN) form a disordered region. The residue at position 188 (threonine 188) is a Phosphothreonine. A coiled-coil region spans residues 202 to 344 (HLLMNIEKQK…RLRIQKEGHL (143 aa)). Residues lysine 237, lysine 254, and lysine 273 each participate in a glycyl lysine isopeptide (Lys-Gly) (interchain with G-Cter in SUMO2) cross-link.

The protein is Myb/SANT-like DNA-binding domain-containing protein 4 (Msantd4) of Rattus norvegicus (Rat).